The chain runs to 268 residues: Putative hydro-lyase Arad_8587 (268 aa).

The protein belongs to the D-glutamate cyclase family.

The sequence is that of Putative hydro-lyase Arad_8587 from Rhizobium rhizogenes (strain K84 / ATCC BAA-868) (Agrobacterium radiobacter).